Consider the following 539-residue polypeptide: GMP synthase [glutamine-hydrolyzing] (539 aa).

A Glutamine amidotransferase type-1 domain is found at 4–202 (KILILDFGSQ…VLQIAGAKPD (199 aa)). Cys-81 (nucleophile) is an active-site residue. Catalysis depends on residues His-176 and Glu-178. One can recognise a GMPS ATP-PPase domain in the interval 203–395 (WIMSNHIEEA…LGLPPEMVYR (193 aa)). 230 to 236 (SGGVDSS) provides a ligand contact to ATP.

Homodimer.

The catalysed reaction is XMP + L-glutamine + ATP + H2O = GMP + L-glutamate + AMP + diphosphate + 2 H(+). The protein operates within purine metabolism; GMP biosynthesis; GMP from XMP (L-Gln route): step 1/1. In terms of biological role, catalyzes the synthesis of GMP from XMP. This Burkholderia ambifaria (strain ATCC BAA-244 / DSM 16087 / CCUG 44356 / LMG 19182 / AMMD) (Burkholderia cepacia (strain AMMD)) protein is GMP synthase [glutamine-hydrolyzing].